The primary structure comprises 455 residues: Bifunctional protein GlmU (455 aa).

Residues M1–R226 form a pyrophosphorylase region. UDP-N-acetyl-alpha-D-glucosamine contacts are provided by residues L8–G11, K22, Q73, G78–T79, Y99–D101, G136, E151, N166, and N224. D101 contributes to the Mg(2+) binding site. Residue N224 participates in Mg(2+) binding. The tract at residues R227–Q247 is linker. An N-acetyltransferase region spans residues G248 to S455. UDP-N-acetyl-alpha-D-glucosamine is bound by residues R330 and K348. H360 acts as the Proton acceptor in catalysis. Residues Y363 and N374 each coordinate UDP-N-acetyl-alpha-D-glucosamine. Acetyl-CoA-binding positions include A377, N383–Y384, S402, A420, and R437.

It in the N-terminal section; belongs to the N-acetylglucosamine-1-phosphate uridyltransferase family. This sequence in the C-terminal section; belongs to the transferase hexapeptide repeat family. As to quaternary structure, homotrimer. Requires Mg(2+) as cofactor.

The protein localises to the cytoplasm. It carries out the reaction alpha-D-glucosamine 1-phosphate + acetyl-CoA = N-acetyl-alpha-D-glucosamine 1-phosphate + CoA + H(+). The enzyme catalyses N-acetyl-alpha-D-glucosamine 1-phosphate + UTP + H(+) = UDP-N-acetyl-alpha-D-glucosamine + diphosphate. It functions in the pathway nucleotide-sugar biosynthesis; UDP-N-acetyl-alpha-D-glucosamine biosynthesis; N-acetyl-alpha-D-glucosamine 1-phosphate from alpha-D-glucosamine 6-phosphate (route II): step 2/2. Its pathway is nucleotide-sugar biosynthesis; UDP-N-acetyl-alpha-D-glucosamine biosynthesis; UDP-N-acetyl-alpha-D-glucosamine from N-acetyl-alpha-D-glucosamine 1-phosphate: step 1/1. It participates in bacterial outer membrane biogenesis; LPS lipid A biosynthesis. Catalyzes the last two sequential reactions in the de novo biosynthetic pathway for UDP-N-acetylglucosamine (UDP-GlcNAc). The C-terminal domain catalyzes the transfer of acetyl group from acetyl coenzyme A to glucosamine-1-phosphate (GlcN-1-P) to produce N-acetylglucosamine-1-phosphate (GlcNAc-1-P), which is converted into UDP-GlcNAc by the transfer of uridine 5-monophosphate (from uridine 5-triphosphate), a reaction catalyzed by the N-terminal domain. This chain is Bifunctional protein GlmU, found in Pseudomonas putida (strain GB-1).